Reading from the N-terminus, the 430-residue chain is Adenylosuccinate synthetase (430 aa).

Residues 12 to 18 (GDEGKGK) and 40 to 42 (GHT) each bind GTP. Aspartate 13 acts as the Proton acceptor in catalysis. Mg(2+)-binding residues include aspartate 13 and glycine 40. IMP is bound by residues 13–16 (DEGK), 38–41 (NAGH), threonine 128, arginine 142, glutamine 223, threonine 238, and arginine 302. Histidine 41 acts as the Proton donor in catalysis. 298 to 304 (TTTGRPR) contacts substrate. GTP-binding positions include arginine 304, 330–332 (SID), and 412–414 (SVG).

This sequence belongs to the adenylosuccinate synthetase family. As to quaternary structure, homodimer. The cofactor is Mg(2+).

It localises to the cytoplasm. The catalysed reaction is IMP + L-aspartate + GTP = N(6)-(1,2-dicarboxyethyl)-AMP + GDP + phosphate + 2 H(+). It functions in the pathway purine metabolism; AMP biosynthesis via de novo pathway; AMP from IMP: step 1/2. Its function is as follows. Plays an important role in the de novo pathway of purine nucleotide biosynthesis. Catalyzes the first committed step in the biosynthesis of AMP from IMP. The sequence is that of Adenylosuccinate synthetase from Bacillus licheniformis (strain ATCC 14580 / DSM 13 / JCM 2505 / CCUG 7422 / NBRC 12200 / NCIMB 9375 / NCTC 10341 / NRRL NRS-1264 / Gibson 46).